The sequence spans 181 residues: Probable inactive acireductone dioxygenase 2 (181 aa).

The protein belongs to the acireductone dioxygenase (ARD) family.

The protein localises to the cytoplasm. It localises to the nucleus. Functionally, probable inactive acireductone dioxygenase. This chain is Probable inactive acireductone dioxygenase 2, found in Sorghum bicolor (Sorghum).